The primary structure comprises 156 residues: tRNA (cytidine(34)-2'-O)-methyltransferase (156 aa).

S-adenosyl-L-methionine contacts are provided by G102, L124, and S132.

It belongs to the class IV-like SAM-binding methyltransferase superfamily. RNA methyltransferase TrmH family. TrmL subfamily. In terms of assembly, homodimer.

The protein resides in the cytoplasm. It carries out the reaction cytidine(34) in tRNA + S-adenosyl-L-methionine = 2'-O-methylcytidine(34) in tRNA + S-adenosyl-L-homocysteine + H(+). The enzyme catalyses 5-carboxymethylaminomethyluridine(34) in tRNA(Leu) + S-adenosyl-L-methionine = 5-carboxymethylaminomethyl-2'-O-methyluridine(34) in tRNA(Leu) + S-adenosyl-L-homocysteine + H(+). Functionally, methylates the ribose at the nucleotide 34 wobble position in the two leucyl isoacceptors tRNA(Leu)(CmAA) and tRNA(Leu)(cmnm5UmAA). Catalyzes the methyl transfer from S-adenosyl-L-methionine to the 2'-OH of the wobble nucleotide. This chain is tRNA (cytidine(34)-2'-O)-methyltransferase, found in Burkholderia cenocepacia (strain HI2424).